We begin with the raw amino-acid sequence, 363 residues long: 3-isopropylmalate dehydrogenase (363 aa).

NAD(+) is bound at residue 76–89; it reads GPKWDTLPGHLRPE. Residues Arg-96, Arg-106, Arg-134, and Asp-223 each contribute to the substrate site. Mg(2+)-binding residues include Asp-223, Asp-247, and Asp-251. 281 to 293 lines the NAD(+) pocket; it reads GSAPDIAGKGVAN.

It belongs to the isocitrate and isopropylmalate dehydrogenases family. LeuB type 1 subfamily. As to quaternary structure, homodimer. The cofactor is Mg(2+). Mn(2+) is required as a cofactor.

The protein localises to the cytoplasm. It catalyses the reaction (2R,3S)-3-isopropylmalate + NAD(+) = 4-methyl-2-oxopentanoate + CO2 + NADH. The protein operates within amino-acid biosynthesis; L-leucine biosynthesis; L-leucine from 3-methyl-2-oxobutanoate: step 3/4. Its function is as follows. Catalyzes the oxidation of 3-carboxy-2-hydroxy-4-methylpentanoate (3-isopropylmalate) to 3-carboxy-4-methyl-2-oxopentanoate. The product decarboxylates to 4-methyl-2 oxopentanoate. This chain is 3-isopropylmalate dehydrogenase, found in Halalkalibacterium halodurans (strain ATCC BAA-125 / DSM 18197 / FERM 7344 / JCM 9153 / C-125) (Bacillus halodurans).